A 482-amino-acid polypeptide reads, in one-letter code: Cytochrome P450 monooxygenase pynD (482 aa).

An N-terminal signal peptide occupies residues 1–22 (MWRIPVIVALVAGLLYWVRKQG). N-linked (GlcNAc...) asparagine glycosylation occurs at Asn-401. Cys-417 serves as a coordination point for heme.

It belongs to the cytochrome P450 family. Heme is required as a cofactor.

It participates in secondary metabolite biosynthesis. Cytochrome P450 monooxygenase; part of the gene cluster that mediates the biosynthesis of pyranonigrins, a family of antioxidative compounds. The first step of pyranonigrins biosynthesis is performed by the hybrid PKS-NRPS synthetase that condenses 6 malonyl-CoA units to an acetyl starter unit, to form a 1,3,5-trioxotetradecane-6,8-dienyl-ACP. The enoyl reductase (ER) domain of pynA is likely to be functional during the first two rounds of polyketide chain extension, to generate the saturated C-C bonds of the alkyl side chain. PynA subsequently forms the amide bond between the acyl chain and L-serine. Although pynA has a terminal reductase domain, it appears to require the thioesterase pynI for the release of the straight-chain intermediate from pynA via the formation of a tetramic acid pyranonigrin J. The methyltransferase pynC then coverts pyranonigrin J to pyranonigrin I via N-methylation. The FAD-dependent monooxygenase pynG catalyzes an epoxidation-mediated cyclization to form the dihydro-gamma-pyrone moiety, followed by pynD-catalyzed oxidation of the alcohol to the ketone and enolization to yield the characteristic tetramic acid-fused gamma-pyrone core of pyranonigrin H. Pyranonigrin H is substrate of pynH for dehydration-mediated exo-methylene formation from the serine side chain to produce pyranonigrin E, before the oxidase pynE reduces the exo-methylene of pyranonigrin E into a pendant methyl to form pyranonigrin G. The FAD-linked oxidoreductase pynB performs the reverse reaction and converts pyranonigrin G back to pyranonigrin E. The polypeptide is Cytochrome P450 monooxygenase pynD (Aspergillus niger (strain ATCC MYA-4892 / CBS 513.88 / FGSC A1513)).